We begin with the raw amino-acid sequence, 190 residues long: MSGLRPALSTFIFLLLITGGVYPLLTTALGQWWFPWQANGSLIREGDTVRGSALIGQNFTGNGYFHGRPSATAEMPYNPQASGGSNLAVSNPELDKLIAARVAALRAANPDASTSVPVELVTASASGLDNNITPQAAAWQIPRVAKARNLSVEQLTQLIAKYSQQPLVKYIGQPVVNIVELNLALDKLDE.

A helical membrane pass occupies residues 10–30 (TFIFLLLITGGVYPLLTTALG).

Belongs to the KdpC family. The system is composed of three essential subunits: KdpA, KdpB and KdpC.

It is found in the cell inner membrane. Functionally, part of the high-affinity ATP-driven potassium transport (or Kdp) system, which catalyzes the hydrolysis of ATP coupled with the electrogenic transport of potassium into the cytoplasm. This subunit acts as a catalytic chaperone that increases the ATP-binding affinity of the ATP-hydrolyzing subunit KdpB by the formation of a transient KdpB/KdpC/ATP ternary complex. The sequence is that of Potassium-transporting ATPase KdpC subunit from Escherichia coli O9:H4 (strain HS).